A 430-amino-acid chain; its full sequence is MAARLLRGSLRVLGGHRAPRQLPAARCSHSGGEERLETPSAKKLTDIGIRRIFSPEHDIFRKSVRKFFQEEVIPHHSEWEKAGEVSREVWEKAGKQGLLGVNIAEHLGGIGGDLYSAAIVWEEQAYSNCSGPGFSIHSGIVMSYITNHGSEEQIKHFIPQMTAGKCIGAIAMTEPGAGSDLQGIKTNAKKDGSDWILNGSKVFISNGSLSDVVIVVAVTNHEAPSPAHGISLFLVENGMKGFIKGRKLHKMGLKAQDTAELFFEDIRLPASALLGEENKGFYYIMKELPQERLLIADVAISASEFMFEETRNYVKQRKAFGKTVAHLQTVQHKLAELKTHICVTRAFVDNCLQLHEAKRLDSATACMAKYWASELQNSVAYDCVQLHGGWGYMWEYPIAKAYVDARVQPIYGGTNEIMKELIAREIVFDK.

The transit peptide at 1–30 (MAARLLRGSLRVLGGHRAPRQLPAARCSHS) directs the protein to the mitochondrion. Position 42 is an N6-acetyllysine (K42). S54 carries the phosphoserine modification. An N6-acetyllysine; alternate mark is found at K66 and K81. K66 and K81 each carry N6-succinyllysine; alternate. N6-acetyllysine occurs at positions 92 and 95. The residue at position 165 (K165) is an N6-succinyllysine. FAD contacts are provided by residues 170–179 (IAMTEPGAGS) and 203–205 (FIS). Residue S179 coordinates substrate. 227-228 (AH) is a substrate binding site. Position 240 is an N6-succinyllysine (K240). An N6-acetyllysine; alternate mark is found at K254 and K279. N6-succinyllysine; alternate occurs at positions 254 and 279. Residues Y282 and 289-292 (PQER) contribute to the substrate site. E291 serves as the catalytic Proton acceptor. R317 serves as a coordination point for FAD. Position 318 is an N6-acetyllysine (K318). Position 322 is an N6-acetyllysine; alternate (K322). Position 322 is an N6-succinyllysine; alternate (K322). Position 328 (Q328) interacts with FAD. Residue K358 is modified to N6-acetyllysine. S362 carries the phosphoserine modification. Position 385-389 (385-389 (QLHGG)) interacts with FAD. A substrate-binding site is contributed by 412-413 (GG). An FAD-binding site is contributed by 414–416 (TNE).

It belongs to the acyl-CoA dehydrogenase family. In terms of assembly, homotetramer. FAD serves as cofactor. Acetylation at Lys-318 and Lys-322 in proximity of the cofactor-binding sites strongly reduces catalytic activity. These sites are deacetylated by SIRT3.

It localises to the mitochondrion matrix. It carries out the reaction a long-chain 2,3-saturated fatty acyl-CoA + oxidized [electron-transfer flavoprotein] + H(+) = a long-chain (2E)-enoyl-CoA + reduced [electron-transfer flavoprotein]. It catalyses the reaction hexanoyl-CoA + oxidized [electron-transfer flavoprotein] + H(+) = (2E)-hexenoyl-CoA + reduced [electron-transfer flavoprotein]. The catalysed reaction is octanoyl-CoA + oxidized [electron-transfer flavoprotein] + H(+) = (2E)-octenoyl-CoA + reduced [electron-transfer flavoprotein]. The enzyme catalyses decanoyl-CoA + oxidized [electron-transfer flavoprotein] + H(+) = (2E)-decenoyl-CoA + reduced [electron-transfer flavoprotein]. It carries out the reaction dodecanoyl-CoA + oxidized [electron-transfer flavoprotein] + H(+) = (2E)-dodecenoyl-CoA + reduced [electron-transfer flavoprotein]. It catalyses the reaction tetradecanoyl-CoA + oxidized [electron-transfer flavoprotein] + H(+) = (2E)-tetradecenoyl-CoA + reduced [electron-transfer flavoprotein]. The catalysed reaction is oxidized [electron-transfer flavoprotein] + hexadecanoyl-CoA + H(+) = (2E)-hexadecenoyl-CoA + reduced [electron-transfer flavoprotein]. The enzyme catalyses octadecanoyl-CoA + oxidized [electron-transfer flavoprotein] + H(+) = (2E)-octadecenoyl-CoA + reduced [electron-transfer flavoprotein]. It carries out the reaction eicosanoyl-CoA + oxidized [electron-transfer flavoprotein] + H(+) = (2E)-eicosenoyl-CoA + reduced [electron-transfer flavoprotein]. It catalyses the reaction docosanoyl-CoA + oxidized [electron-transfer flavoprotein] + H(+) = (2E)-docosenoyl-CoA + reduced [electron-transfer flavoprotein]. The catalysed reaction is tetracosanoyl-CoA + oxidized [electron-transfer flavoprotein] + H(+) = (2E)-tetracosenoyl-CoA + reduced [electron-transfer flavoprotein]. The enzyme catalyses (5E)-tetradecenoyl-CoA + oxidized [electron-transfer flavoprotein] + H(+) = (2E,5E)-tetradecadienoyl-CoA + reduced [electron-transfer flavoprotein]. It carries out the reaction (5Z)-tetradecenoyl-CoA + oxidized [electron-transfer flavoprotein] + H(+) = (2E,5Z)-tetradecadienoyl-CoA + reduced [electron-transfer flavoprotein]. It catalyses the reaction oxidized [electron-transfer flavoprotein] + (9Z)-octadecenoyl-CoA + H(+) = (2E,9Z)-octadecadienoyl-CoA + reduced [electron-transfer flavoprotein]. It functions in the pathway lipid metabolism; mitochondrial fatty acid beta-oxidation. In terms of biological role, long-chain specific acyl-CoA dehydrogenase is one of the acyl-CoA dehydrogenases that catalyze the first step of mitochondrial fatty acid beta-oxidation, an aerobic process breaking down fatty acids into acetyl-CoA and allowing the production of energy from fats. The first step of fatty acid beta-oxidation consists in the removal of one hydrogen from C-2 and C-3 of the straight-chain fatty acyl-CoA thioester, resulting in the formation of trans-2-enoyl-CoA. Among the different mitochondrial acyl-CoA dehydrogenases, long-chain specific acyl-CoA dehydrogenase can act on saturated and unsaturated acyl-CoAs with 6 to 24 carbons with a preference for 8 to 18 carbons long primary chains. The chain is Long-chain specific acyl-CoA dehydrogenase, mitochondrial from Homo sapiens (Human).